Here is a 163-residue protein sequence, read N- to C-terminus: Protein-export protein SecB (163 aa).

The protein belongs to the SecB family. Homotetramer, a dimer of dimers. One homotetramer interacts with 1 SecA dimer.

It is found in the cytoplasm. Its function is as follows. One of the proteins required for the normal export of preproteins out of the cell cytoplasm. It is a molecular chaperone that binds to a subset of precursor proteins, maintaining them in a translocation-competent state. It also specifically binds to its receptor SecA. In Burkholderia cenocepacia (strain ATCC BAA-245 / DSM 16553 / LMG 16656 / NCTC 13227 / J2315 / CF5610) (Burkholderia cepacia (strain J2315)), this protein is Protein-export protein SecB.